The chain runs to 388 residues: tRNA (guanine(26)-N(2))-dimethyltransferase (388 aa).

The Trm1 methyltransferase domain maps to 4–383; it reads RTIVEGTTKI…APIAEIKKII (380 aa). Positions 41, 78, 94, and 123 each coordinate S-adenosyl-L-methionine. Zn(2+) is bound by residues Cys-251, Cys-254, Cys-271, and Cys-274.

Belongs to the class I-like SAM-binding methyltransferase superfamily. Trm1 family.

It carries out the reaction guanosine(26) in tRNA + 2 S-adenosyl-L-methionine = N(2)-dimethylguanosine(26) in tRNA + 2 S-adenosyl-L-homocysteine + 2 H(+). Dimethylates a single guanine residue at position 26 of a number of tRNAs using S-adenosyl-L-methionine as donor of the methyl groups. This is tRNA (guanine(26)-N(2))-dimethyltransferase from Methanosarcina mazei (strain ATCC BAA-159 / DSM 3647 / Goe1 / Go1 / JCM 11833 / OCM 88) (Methanosarcina frisia).